The sequence spans 78 residues: Large ribosomal subunit protein bL28 (78 aa).

Belongs to the bacterial ribosomal protein bL28 family.

The chain is Large ribosomal subunit protein bL28 from Thioalkalivibrio sulfidiphilus (strain HL-EbGR7).